A 156-amino-acid chain; its full sequence is Persephin (156 aa).

An N-terminal signal peptide occupies residues 1 to 21 (MAVGKFLLGSLLLLSLQLGQG). Cystine bridges form between Cys66–Cys124, Cys93–Cys152, and Cys97–Cys154.

Belongs to the TGF-beta family. GDNF subfamily. Homodimer; disulfide-linked. Interacts with GFRA4 coreceptor and RET: forms a 2:2:2 ternary complex composed of PSPN ligand, GFRA4 and RET receptor.

It is found in the secreted. Functionally, growth factor that exhibits neurotrophic activity on mesencephalic dopaminergic and motor neurons. Acts by binding to its coreceptor, GFRA4, leading to autophosphorylation and activation of the RET receptor. This chain is Persephin, found in Homo sapiens (Human).